A 156-amino-acid polypeptide reads, in one-letter code: ATP synthase subunit b (156 aa).

A helical membrane pass occupies residues 7-27 (LFAQIIVFFGLVWFTMKFVWP).

The protein belongs to the ATPase B chain family. As to quaternary structure, F-type ATPases have 2 components, F(1) - the catalytic core - and F(0) - the membrane proton channel. F(1) has five subunits: alpha(3), beta(3), gamma(1), delta(1), epsilon(1). F(0) has three main subunits: a(1), b(2) and c(10-14). The alpha and beta chains form an alternating ring which encloses part of the gamma chain. F(1) is attached to F(0) by a central stalk formed by the gamma and epsilon chains, while a peripheral stalk is formed by the delta and b chains.

The protein resides in the cell inner membrane. Functionally, f(1)F(0) ATP synthase produces ATP from ADP in the presence of a proton or sodium gradient. F-type ATPases consist of two structural domains, F(1) containing the extramembraneous catalytic core and F(0) containing the membrane proton channel, linked together by a central stalk and a peripheral stalk. During catalysis, ATP synthesis in the catalytic domain of F(1) is coupled via a rotary mechanism of the central stalk subunits to proton translocation. Its function is as follows. Component of the F(0) channel, it forms part of the peripheral stalk, linking F(1) to F(0). This is ATP synthase subunit b from Neisseria gonorrhoeae (strain NCCP11945).